A 123-amino-acid polypeptide reads, in one-letter code: Small ribosomal subunit protein uS12 (123 aa).

The disordered stretch occupies residues methionine 1 to arginine 22. The residue at position 89 (aspartate 89) is a 3-methylthioaspartic acid. The interval alanine 101–lysine 123 is disordered. Over residues lysine 111–lysine 123 the composition is skewed to basic residues.

It belongs to the universal ribosomal protein uS12 family. As to quaternary structure, part of the 30S ribosomal subunit. Contacts proteins S8 and S17. May interact with IF1 in the 30S initiation complex.

Its function is as follows. With S4 and S5 plays an important role in translational accuracy. Functionally, interacts with and stabilizes bases of the 16S rRNA that are involved in tRNA selection in the A site and with the mRNA backbone. Located at the interface of the 30S and 50S subunits, it traverses the body of the 30S subunit contacting proteins on the other side and probably holding the rRNA structure together. The combined cluster of proteins S8, S12 and S17 appears to hold together the shoulder and platform of the 30S subunit. This Teredinibacter turnerae (strain ATCC 39867 / T7901) protein is Small ribosomal subunit protein uS12.